A 156-amino-acid chain; its full sequence is Arginine repressor (156 aa).

It belongs to the ArgR family.

The protein localises to the cytoplasm. It functions in the pathway amino-acid biosynthesis; L-arginine biosynthesis [regulation]. Its function is as follows. Regulates arginine biosynthesis genes. The sequence is that of Arginine repressor from Erwinia tasmaniensis (strain DSM 17950 / CFBP 7177 / CIP 109463 / NCPPB 4357 / Et1/99).